Consider the following 513-residue polypeptide: Protein CYCLOPS (513 aa).

Disordered stretches follow at residues 329 to 380 (QGRT…STQN) and 395 to 435 (DDRK…AEAK). A compositionally biased stretch (low complexity) spans 333–347 (ASGEPSQSESSAAAP). The segment covering 359–380 (PSNSNQTLGDSSWKQVGESTQN) has biased composition (polar residues). Short sequence motifs (nuclear localization signal) lie at residues 397 to 400 (RKRK) and 421 to 424 (KKRR). A coiled-coil region spans residues 447-513 (MQAILKRCEN…ERILSETGKI (67 aa)).

Belongs to the CYCLOPS family. Forms homodimers. Interacts with CCAMK. Highly expressed in roots. Expressed in root hairs and nodules. Not detected in leaves or flowers.

The protein localises to the nucleus. Involved symbiotic signaling. Required for root infection by symbiotic rhizobia, infection thread (IT) formation, and nodule development. Required for proper induction of early nodulin gene expression. Probably not involved in nodule organogenesis. Involved in arbuscular mycorrhizal (AM) symbiosis. Required for fungal infection of the outer cortical cell layers, and for arbuscule development during the AM symbiosis. Acts downstream of CCAMK. Required for symbiosome formation (i.e. the release of the bacteria from the ITs) and subsequent symbiosome development. Required for the expression of the nodule-specific RPG gene, which controls proper IT growth and is essential for symbiosome formation. Acts upstream of ERN1, a transcriptional regulator required for nodulation. The chain is Protein CYCLOPS from Medicago truncatula (Barrel medic).